A 415-amino-acid chain; its full sequence is MSYETVREADPAVADALEGERGRQNDTLAMIASENHVSEAVMEAQSSELTNKYAEGYPGERYYGGCEYADDVEELAIDRAKELWGADHVNVQPHSGSQANMGVYLGVLEPGDKILSLDLTHGGHLSHGHPANFAGQVYEVEQYKVDEETGYVDYEGLHDHAEEFEPDIIVSGYSAYPREVDFERIQEAADAVDAYHLADIAHITGLVAAGVHESPVGVADFVTGSTHKTIRAGRGGIIMCDEEYADDIDAAVFPGSQGGPLMHNVAGKAVGFGEALAPEFEQYAQQTVDNAIALGEQFKEHGLSLVSGGTDNHLVLIDLRPSHPDTTGKEVEEALEEAGIVLNANTVPGETRSAFNPSGIRAGTPALTTRGFDEDACREVADLIYKVVDAPHDDDVVAEVSDRVDEMTDEYTLYE.

Residues Leu-119 and 123–125 (GHL) contribute to the (6S)-5,6,7,8-tetrahydrofolate site. N6-(pyridoxal phosphate)lysine is present on Lys-228. 353-355 (SAF) serves as a coordination point for (6S)-5,6,7,8-tetrahydrofolate.

Belongs to the SHMT family. As to quaternary structure, homodimer. Requires pyridoxal 5'-phosphate as cofactor.

Its subcellular location is the cytoplasm. The catalysed reaction is (6R)-5,10-methylene-5,6,7,8-tetrahydrofolate + glycine + H2O = (6S)-5,6,7,8-tetrahydrofolate + L-serine. It functions in the pathway one-carbon metabolism; tetrahydrofolate interconversion. The protein operates within amino-acid biosynthesis; glycine biosynthesis; glycine from L-serine: step 1/1. Functionally, catalyzes the reversible interconversion of serine and glycine with tetrahydrofolate (THF) serving as the one-carbon carrier. Also exhibits THF-independent aldolase activity toward beta-hydroxyamino acids, producing glycine and aldehydes, via a retro-aldol mechanism. The sequence is that of Serine hydroxymethyltransferase from Haloarcula marismortui (strain ATCC 43049 / DSM 3752 / JCM 8966 / VKM B-1809) (Halobacterium marismortui).